We begin with the raw amino-acid sequence, 554 residues long: Valerianol synthase TPS1C (554 aa).

Asp-307 and Asp-311 together coordinate Mg(2+). The short motif at 326–330 (VQRWD) is the DDXXD motif element. Residues Asp-452, Ser-456, and Glu-460 each contribute to the Mg(2+) site.

Belongs to the terpene synthase family. Mg(2+) is required as a cofactor.

It catalyses the reaction (2E,6E)-farnesyl diphosphate + H2O = valerianol + diphosphate. It functions in the pathway secondary metabolite biosynthesis; terpenoid biosynthesis. Terpene synthase that catalyzes the biosynthesis of the terpene valerianol, which is a volatile compound of floral scent. The polypeptide is Valerianol synthase TPS1C (Camellia hiemalis (Camellia)).